Here is a 236-residue protein sequence, read N- to C-terminus: Sensory rhodopsin I (236 aa).

Helical transmembrane passes span 6–26, 37–57, 74–94, 98–118, 126–146, 167–187, and 192–212; these read VVYG…GFLY, ILAA…AMVF, YLDW…TAGA, AIFG…GAVV, ALFG…YLIF, VGLL…GLGF, and GVSI…VYFF. At lysine 205 the chain carries N6-(retinylidene)lysine.

Belongs to the archaeal/bacterial/fungal opsin family. As to quaternary structure, interacts with Htr1. Post-translationally, the covalent binding of retinal to the apoprotein, bacterioopsin, generates bacteriorhodopsin.

It localises to the membrane. Photoattractant rhodopsin. The protein is Sensory rhodopsin I (sop1) of Haloarcula marismortui (strain ATCC 43049 / DSM 3752 / JCM 8966 / VKM B-1809) (Halobacterium marismortui).